Reading from the N-terminus, the 142-residue chain is Deoxyuridine 5'-triphosphate nucleotidohydrolase (142 aa).

This sequence belongs to the dUTPase family. Mg(2+) is required as a cofactor.

It catalyses the reaction dUTP + H2O = dUMP + diphosphate + H(+). This enzyme is involved in nucleotide metabolism: it produces dUMP, the immediate precursor of thymidine nucleotides and it decreases the intracellular concentration of dUTP so that uracil cannot be incorporated into DNA. The protein is Deoxyuridine 5'-triphosphate nucleotidohydrolase (DUT) of Swinepox virus (strain Kasza) (SWPV).